The following is a 182-amino-acid chain: uncharacterized protein (182 aa).

Disordered stretches follow at residues 1–49 (MAAP…DGGS) and 126–171 (QGGH…VHAQ). A compositionally biased stretch (basic and acidic residues) spans 17–39 (ELLEKAARLERGPPPRGDPEAVG).

This is an uncharacterized protein from Homo sapiens (Human).